We begin with the raw amino-acid sequence, 298 residues long: Probable endonuclease 4 (298 aa).

Positions 69, 110, 145, 179, 182, 214, 227, 229, and 259 each coordinate Zn(2+).

This sequence belongs to the AP endonuclease 2 family. Requires Zn(2+) as cofactor.

It catalyses the reaction Endonucleolytic cleavage to 5'-phosphooligonucleotide end-products.. Functionally, endonuclease IV plays a role in DNA repair. It cleaves phosphodiester bonds at apurinic or apyrimidinic (AP) sites, generating a 3'-hydroxyl group and a 5'-terminal sugar phosphate. The protein is Probable endonuclease 4 of Geobacillus sp. (strain WCH70).